Here is a 245-residue protein sequence, read N- to C-terminus: Probable 2-phosphosulfolactate phosphatase (245 aa).

This sequence belongs to the ComB family. Requires Mg(2+) as cofactor.

The enzyme catalyses (2R)-O-phospho-3-sulfolactate + H2O = (2R)-3-sulfolactate + phosphate. The polypeptide is Probable 2-phosphosulfolactate phosphatase (Nostoc sp. (strain PCC 7120 / SAG 25.82 / UTEX 2576)).